Reading from the N-terminus, the 359-residue chain is Non-functional pseudokinase ZRK2 (359 aa).

A compositionally biased stretch (basic residues) spans 1–10; sequence MKSMVKKLKQ. The tract at residues 1–20 is disordered; the sequence is MKSMVKKLKQSLRSGSLEKR. The 293-residue stretch at 64–356 folds into the Protein kinase domain; sequence LKATSNFGSS…KELKQIETLF (293 aa). ATP contacts are provided by residues 70–78 and K97; that span reads FGSSCFVTA.

This sequence belongs to the protein kinase superfamily. Ser/Thr protein kinase family. ZRK subfamily.

The chain is Non-functional pseudokinase ZRK2 from Arabidopsis thaliana (Mouse-ear cress).